The sequence spans 30 residues: NADH-ubiquinone oxidoreductase chain 5 (30 aa).

The helical transmembrane segment at 7–27 (NIIIIINSSLIIILFSSIFFF) threads the bilayer.

This sequence belongs to the complex I subunit 5 family.

The protein localises to the mitochondrion inner membrane. The catalysed reaction is a ubiquinone + NADH + 5 H(+)(in) = a ubiquinol + NAD(+) + 4 H(+)(out). In terms of biological role, core subunit of the mitochondrial membrane respiratory chain NADH dehydrogenase (Complex I) that is believed to belong to the minimal assembly required for catalysis. Complex I functions in the transfer of electrons from NADH to the respiratory chain. The immediate electron acceptor for the enzyme is believed to be ubiquinone. This chain is NADH-ubiquinone oxidoreductase chain 5 (ND5), found in Pisaster ochraceus (Ochre sea star).